The sequence spans 422 residues: MHIHKIQAREILDSRGNPTIEADVILENGIIGRASVPSGASTGSREACELRDNDPKRYAGKGVQKAVKHVNEEINQALQGLSVSDQENLDRILCQLDNTENKSHLGANAILATSLACARARALSLNQPLYMTLNQGDMMTMPVPMMNILNGGAHADNNVDIQEFMIMPIGAPDFPVALQMGTEIFHVLKSVLKKQGLNTAVGDEGGFAPNIQSNRQALDLLSEAIEKAGFRLGEDIVFALDVAASELFNEGFYHMSSENQKFDSHQLIEYYANLISSYPIASIEDGLDEKDWSGWKQLTTLLGNKVQLVGDDLFVTNPKILQEGIAQGIANAILIKVNQIGTLSETRQAIKLAYDNGYRCVMSHRSGETEDTFIADLAVASGCGQIKTGSLCRTDRTAKYNQLLRINELASLPYAGKNILKR.

Gln-162 provides a ligand contact to (2R)-2-phosphoglycerate. Glu-204 acts as the Proton donor in catalysis. Residues Asp-241, Glu-284, and Asp-311 each contribute to the Mg(2+) site. The (2R)-2-phosphoglycerate site is built by Lys-336, Arg-365, Ser-366, and Lys-387. The active-site Proton acceptor is Lys-336.

Belongs to the enolase family. As to quaternary structure, component of the RNA degradosome, a multiprotein complex involved in RNA processing and mRNA degradation. The cofactor is Mg(2+).

The protein resides in the cytoplasm. It is found in the secreted. Its subcellular location is the cell surface. It catalyses the reaction (2R)-2-phosphoglycerate = phosphoenolpyruvate + H2O. It participates in carbohydrate degradation; glycolysis; pyruvate from D-glyceraldehyde 3-phosphate: step 4/5. Functionally, catalyzes the reversible conversion of 2-phosphoglycerate (2-PG) into phosphoenolpyruvate (PEP). It is essential for the degradation of carbohydrates via glycolysis. The chain is Enolase from Legionella pneumophila (strain Lens).